The chain runs to 277 residues: Putative gamma-glutamylcyclotransferase YkqA (277 aa).

8-11 serves as a coordination point for substrate; that stretch reads YGTL. The Proton acceptor role is filled by glutamate 205.

It belongs to the gamma-glutamylcyclotransferase family.

Functionally, putative gamma-glutamylcyclotransferase. This Bacillus subtilis (strain 168) protein is Putative gamma-glutamylcyclotransferase YkqA (ykqA).